A 463-amino-acid polypeptide reads, in one-letter code: uncharacterized protein (463 aa).

12 helical membrane-spanning segments follow: residues 21-40, 50-72, 84-104, 112-132, 156-176, 186-206, 237-257, 271-291, 311-331, 334-354, 367-387, and 408-428; these read DFAC…FFYT, AGTM…GTIV, PYLL…FTTP, LIYA…INVP, LFAN…AAYL, GWQL…IFCF, LVVL…SNSV, LVKW…PFIP, IIGL…ILVC, IAAA…PETI, GLIY…GGVV, and LMGI…LALI.

The protein belongs to the sodium:galactoside symporter (TC 2.A.2) family.

It is found in the cell membrane. This is an uncharacterized protein from Bacillus subtilis (strain 168).